Consider the following 187-residue polypeptide: Troponin I, slow skeletal muscle (187 aa).

Pro-2 bears the N-acetylproline mark. An involved in binding TNC region spans residues 2–48; that stretch reads PEVERKSKITASRKLMLKSLMLAKAKECWEQEHEEREAEKVRYLSER. A Phosphoserine modification is found at Ser-58. An involved in binding TNC and actin region spans residues 97–118; sequence LKLKVLDLRGKFKRPPLRRVRV.

The protein belongs to the troponin I family. In terms of assembly, binds to actin and tropomyosin.

In terms of biological role, troponin I is the inhibitory subunit of troponin, the thin filament regulatory complex which confers calcium-sensitivity to striated muscle actomyosin ATPase activity. The sequence is that of Troponin I, slow skeletal muscle (Tnni1) from Mus musculus (Mouse).